A 145-amino-acid polypeptide reads, in one-letter code: D-aminoacyl-tRNA deacylase (145 aa).

The Gly-cisPro motif, important for rejection of L-amino acids motif lies at 137-138 (GP).

This sequence belongs to the DTD family. In terms of assembly, homodimer.

It is found in the cytoplasm. The catalysed reaction is glycyl-tRNA(Ala) + H2O = tRNA(Ala) + glycine + H(+). It catalyses the reaction a D-aminoacyl-tRNA + H2O = a tRNA + a D-alpha-amino acid + H(+). Functionally, an aminoacyl-tRNA editing enzyme that deacylates mischarged D-aminoacyl-tRNAs. Also deacylates mischarged glycyl-tRNA(Ala), protecting cells against glycine mischarging by AlaRS. Acts via tRNA-based rather than protein-based catalysis; rejects L-amino acids rather than detecting D-amino acids in the active site. By recycling D-aminoacyl-tRNA to D-amino acids and free tRNA molecules, this enzyme counteracts the toxicity associated with the formation of D-aminoacyl-tRNA entities in vivo and helps enforce protein L-homochirality. The protein is D-aminoacyl-tRNA deacylase of Shewanella baltica (strain OS155 / ATCC BAA-1091).